Here is a 119-residue protein sequence, read N- to C-terminus: Protein phosphatase EYA1 (119 aa).

The protein belongs to the HAD-like hydrolase superfamily. EYA family. It depends on Mg(2+) as a cofactor.

It is found in the cytoplasm. The protein resides in the nucleus. It catalyses the reaction O-phospho-L-tyrosyl-[protein] + H2O = L-tyrosyl-[protein] + phosphate. The catalysed reaction is O-phospho-L-seryl-[protein] + H2O = L-seryl-[protein] + phosphate. The enzyme catalyses O-phospho-L-threonyl-[protein] + H2O = L-threonyl-[protein] + phosphate. In terms of biological role, functions both as protein phosphatase and as transcriptional coactivator for SIX1, and probably also for other transcription factors of this family. Tyrosine phosphatase that dephosphorylates 'Tyr-142' of histone H2AX (H2AXY142ph) and promotes efficient DNA repair via the recruitment of DNA repair complexes containing MDC1. 'Tyr-142' phosphorylation of histone H2AX plays a central role in DNA repair and acts as a mark that distinguishes between apoptotic and repair responses to genotoxic stress. Its function as histone phosphatase may contribute to its function in transcription regulation during organogenesis. Also has phosphatase activity with proteins phosphorylated on Ser and Thr residues (in vitro). Required for normal embryonic development of the skeleton, kidneys and ears. The protein is Protein phosphatase EYA1 (EYA1) of Gallus gallus (Chicken).